Here is a 327-residue protein sequence, read N- to C-terminus: Biotin synthase (327 aa).

The 228-residue stretch at 51-278 (QTIQLSTLMS…KSYVRLSAGR (228 aa)) folds into the Radical SAM core domain. Residues Cys-66, Cys-70, and Cys-73 each contribute to the [4Fe-4S] cluster site. [2Fe-2S] cluster contacts are provided by Cys-110, Cys-141, Cys-201, and Arg-273.

Belongs to the radical SAM superfamily. Biotin synthase family. As to quaternary structure, homodimer. Requires [4Fe-4S] cluster as cofactor. The cofactor is [2Fe-2S] cluster.

It carries out the reaction (4R,5S)-dethiobiotin + (sulfur carrier)-SH + 2 reduced [2Fe-2S]-[ferredoxin] + 2 S-adenosyl-L-methionine = (sulfur carrier)-H + biotin + 2 5'-deoxyadenosine + 2 L-methionine + 2 oxidized [2Fe-2S]-[ferredoxin]. Its pathway is cofactor biosynthesis; biotin biosynthesis; biotin from 7,8-diaminononanoate: step 2/2. Its function is as follows. Catalyzes the conversion of dethiobiotin (DTB) to biotin by the insertion of a sulfur atom into dethiobiotin via a radical-based mechanism. In Histophilus somni (strain 2336) (Haemophilus somnus), this protein is Biotin synthase.